Here is a 481-residue protein sequence, read N- to C-terminus: Probable autolysin LytO (481 aa).

In terms of domain architecture, Peptidase C51 spans 7 to 148 (KNEFIEWLKT…AYDFPMWFIR (142 aa)). Residues 155 to 165 (TAPRSVQSPTQ) show a composition bias toward polar residues. A disordered region spans residues 155–177 (TAPRSVQSPTQAPKKETAKPQPK). The region spanning 198 to 323 (SNPKGIVIHN…NEFTSTSCPH (126 aa)) is the N-acetylmuramoyl-L-alanine amidase domain. The SH3b domain maps to 398-466 (EESARFTNGN…YLPIRTWNGS (69 aa)).

Belongs to the N-acetylmuramoyl-L-alanine amidase 2 family.

It carries out the reaction Hydrolyzes the link between N-acetylmuramoyl residues and L-amino acid residues in certain cell-wall glycopeptides.. In terms of biological role, has weak lytic activity toward S.aureus cells. The chain is Probable autolysin LytO from Staphylococcus aureus (strain NCTC 8325 / PS 47).